The primary structure comprises 400 residues: Tryptophan synthase beta chain (400 aa).

Lysine 92 carries the N6-(pyridoxal phosphate)lysine modification.

Belongs to the TrpB family. Tetramer of two alpha and two beta chains. It depends on pyridoxal 5'-phosphate as a cofactor.

It carries out the reaction (1S,2R)-1-C-(indol-3-yl)glycerol 3-phosphate + L-serine = D-glyceraldehyde 3-phosphate + L-tryptophan + H2O. The protein operates within amino-acid biosynthesis; L-tryptophan biosynthesis; L-tryptophan from chorismate: step 5/5. Its function is as follows. The beta subunit is responsible for the synthesis of L-tryptophan from indole and L-serine. The polypeptide is Tryptophan synthase beta chain (Leptospira borgpetersenii serovar Hardjo-bovis (strain JB197)).